Consider the following 744-residue polypeptide: Biotin sulfoxide reductase (744 aa).

S121 is a binding site for Mo-bis(molybdopterin guanine dinucleotide).

The protein belongs to the prokaryotic molybdopterin-containing oxidoreductase family. Requires Mo-bis(molybdopterin guanine dinucleotide) as cofactor.

Its function is as follows. This enzyme may serve as a scavenger, allowing the cell to utilize biotin sulfoxide as a biotin source. It reduces a spontaneous oxidation product of biotin, D-biotin D-sulfoxide (BSO or BDS), back to biotin. The chain is Biotin sulfoxide reductase from Cereibacter sphaeroides (Rhodobacter sphaeroides).